Consider the following 476-residue polypeptide: Xylan O-acetyltransferase 4 (476 aa).

The segment at 1 to 37 is disordered; sequence MTKPQQQSPPSTTATTTTSPPPPPPSTPPPASSSSSS. The Cytoplasmic segment spans residues 1–63; the sequence is MTKPQQQSPP…SLLSALRRSP (63 aa). Residues 8-18 are compositionally biased toward low complexity; sequence SPPSTTATTTT. Pro residues predominate over residues 19 to 31; the sequence is SPPPPPPSTPPPA. A helical; Signal-anchor for type II membrane protein membrane pass occupies residues 64–80; sequence VTTLVAAFFLLALFMYG. Over 81-476 the chain is Lumenal; the sequence is EDVRTLAELS…PSPHPPLPPQ (396 aa). N-linked (GlcNAc...) asparagine glycosylation is found at N103, N128, and N167. 4 cysteine pairs are disulfide-bonded: C117/C168, C139/C204, C148/C444, and C360/C440. Residues 191–193 carry the GDS motif motif; sequence GDS. Residue S193 is the Nucleophile of the active site. N-linked (GlcNAc...) asparagine glycans are attached at residues N299 and N369. D439 functions as the Proton donor in the catalytic mechanism. The DXXH motif signature appears at 439–442; the sequence is DCIH. H442 (proton acceptor) is an active-site residue.

Belongs to the PC-esterase family. TBL subfamily. As to expression, highly expressed in leaves. Expressed in roots, stems and inflorescences.

Its subcellular location is the golgi apparatus membrane. Functionally, xylan acetyltransferase required for 2-O- and 3-O-monoacetylation of xylosyl residues in xylan. Catalyzes the 2-O-acetylation of xylan, followed by nonenzymatic acetyl migration to the O-3 position, resulting in products that are monoacetylated at both O-2 and O-3 positions. The chain is Xylan O-acetyltransferase 4 from Oryza sativa subsp. japonica (Rice).